We begin with the raw amino-acid sequence, 350 residues long: Probable DNA polymerase III subunit delta (350 aa).

The protein belongs to the DNA polymerase HolA subunit family. Component of the DNA clamp loading complex consisting of tau(3):delta(1):delta'(1). The DNA polymerase III holoenzyme complex contains at least 10 different subunits organized into 3 functionally essential subassemblies: the Pol III core, the beta sliding clamp processivity factor and the clamp-loading complex. The Pol III core (subunits alpha, epsilon and theta) contains the polymerase and the 3'-5' exonuclease proofreading activities. The polymerase is tethered to the template via the dimeric beta sliding clamp processivity factor. The DNA clamp-loading complex assembles the beta sliding clamp onto the primed template and plays a central role in the organization and communication at the replication fork.

The enzyme catalyses DNA(n) + a 2'-deoxyribonucleoside 5'-triphosphate = DNA(n+1) + diphosphate. Functionally, part of the beta sliding clamp loading complex, which hydrolyzes ATP to load the beta clamp onto primed DNA to form the DNA replication pre-initiation complex. DNA polymerase III is a complex, multichain enzyme responsible for most of the replicative synthesis in bacteria. This DNA polymerase also exhibits 3'-5' exonuclease activity. The delta subunit is the wrench that will open the beta subunit dimer. The DNA clamp loading complex (tau(3),delta,delta') is thought to load beta dimers onto DNA by binding ATP which alters the complex's conformation so it can bind beta sliding clamp dimers and open them at one interface. Primed DNA is recognized, ATP is hydrolyzed releasing the clamp loading complex and closing the beta sliding clamp ring around the primed DNA. This is Probable DNA polymerase III subunit delta from Aquifex aeolicus (strain VF5).